Here is a 109-residue protein sequence, read N- to C-terminus: Parvalbumin beta (109 aa).

At Ser-1 the chain carries N-acetylserine. 2 consecutive EF-hand domains span residues 38–73 (KTPD…FASS) and 77–109 (LTDK…VKEA). Residues Asp-51, Asp-53, Ser-55, Phe-57, Glu-59, Glu-62, Asp-90, Asp-92, Asp-94, Lys-96, and Glu-101 each coordinate Ca(2+).

The protein belongs to the parvalbumin family.

In muscle, parvalbumin is thought to be involved in relaxation after contraction. It binds two calcium ions. The sequence is that of Parvalbumin beta from Opsanus tau (Oyster toadfish).